The primary structure comprises 612 residues: FAD-linked oxidoreductase easE (612 aa).

The region spanning 129-313 is the FAD-binding PCMH-type domain; the sequence is HQGRIPLYSA…TRATMRVFPD (185 aa).

It belongs to the oxygen-dependent FAD-linked oxidoreductase family. FAD serves as cofactor.

The protein operates within alkaloid biosynthesis; ergot alkaloid biosynthesis. Its function is as follows. FAD-linked oxidoreductase; part of the gene cluster that mediates the biosynthesis of fungal ergot alkaloid. DmaW catalyzes the first step of ergot alkaloid biosynthesis by condensing dimethylallyl diphosphate (DMAP) and tryptophan to form 4-dimethylallyl-L-tryptophan. The second step is catalyzed by the methyltransferase easF that methylates 4-dimethylallyl-L-tryptophan in the presence of S-adenosyl-L-methionine, resulting in the formation of 4-dimethylallyl-L-abrine. The catalase easC and the FAD-dependent oxidoreductase easE then transform 4-dimethylallyl-L-abrine to chanoclavine-I which is further oxidized by easD in the presence of NAD(+), resulting in the formation of chanoclavine-I aldehyde. Chanoclavine-I aldehyde is the precursor of ergoamides and ergopeptines in Clavicipitaceae, and clavine-type alcaloids such as fumiclavine in Trichocomaceae. However, the metabolites downstream of chanoclavine-I aldehyde in Arthrodermataceae have not been identified yet. The chain is FAD-linked oxidoreductase easE from Arthroderma otae (strain ATCC MYA-4605 / CBS 113480) (Microsporum canis).